Here is a 233-residue protein sequence, read N- to C-terminus: Serine-rich 25 kDa antigen protein (233 aa).

A disordered region spans residues Lys35–Ser219. Over residues Ala38–Ser53 the composition is skewed to basic and acidic residues. Residues Ser61–Glu71 show a composition bias toward acidic residues. 10 tandem repeats follow at residues Ser82–Ala93, Ser102–Ala113, Ser114–Ala125, Ser126–Ala137, Ser138–Ala149, Ser150–Ala161, Ser162–Ala169, Ser170–Ala177, Ser178–Ala185, and Ser186–Ala193. The 6 X 12 AA tandem repeats of S-S-S-D-K-P-D-N-K-P-E-A stretch occupies residues Ser82–Ala161. Basic and acidic residues predominate over residues Ser83–Pro159. The segment covering Glu160–Glu192 has biased composition (polar residues). Residues Ser162–Ala193 form a 4 X 8 AA tandem repeats of S-S-T-N-K-P-E-A region. The segment covering Ala193 to Ser219 has biased composition (low complexity).

Post-translationally, phosphorylated on serine residue(s). In terms of processing, O-glycosylated; glycans consist of single N-acetylglucosamine residues. O-acylated; acyl group is probably palmitate, not myristate.

The protein resides in the cell membrane. In terms of biological role, plays a role in the adhesion to host cells. Involved in the adhesion to host apoptotic cells thereby facilitating their phagocytosis. The sequence is that of Serine-rich 25 kDa antigen protein from Entamoeba histolytica (strain ATCC 30459 / HM-1:IMSS / ABRM).